We begin with the raw amino-acid sequence, 347 residues long: MTTLLQLLSNYYKAKLDSERIYNEYVQSQYEFASLDKLNNNKGDPKKVVDETLFLQRQIAQLNKQLQLSFQENEKLLSVQKNQKALYQSKLSSKDAFIDDLKLKLKVEQISVDKHNKERTPSTGRDEQQRNSKAAHTSKPTIHLLSPIVNRDKPNNQTNDRGGNDPDSPTSQRRSRGLRSLLSSGKNTIFDSISKNLDDEINENAHIRNDTTSSKIAGKSPSRLSALQKSPELRKERNNMILKEHILRSKDDQNITSSRKLDNIELSSIGDSTAMTSRSSTVNANDILGNEENDGITKLKRVNKLTSSPVKRDCSTNKKRKLTKQRIATLPNSDEELSNNLNVDEFV.

A coiled-coil region spans residues 46-118 (KKVVDETLFL…QISVDKHNKE (73 aa)). The span at 112–130 (VDKHNKERTPSTGRDEQQR) shows a compositional bias: basic and acidic residues. Disordered regions lie at residues 112–183 (VDKH…SLLS) and 208–230 (RNDT…LQKS). Composition is skewed to polar residues over residues 131–140 (NSKAAHTSKP) and 155–172 (NNQT…PTSQ). Residues Ser-168 and Ser-230 each carry the phosphoserine modification.

Component of the monopolin complex composed of at least CSM1, LRS4 and MAM1. The complex associates with the kinetochore. Phosphorylated by CDC5. This phosphorylation is required for the location to the kinetochores during late pachytene.

The protein localises to the nucleus. It is found in the nucleolus. It localises to the chromosome. The protein resides in the centromere. Functionally, component of the monopolin complex which promotes monoorientation during meiosis I, required for chromosome segregation during meiosis. Involved in rDNA silencing. In Saccharomyces cerevisiae (strain ATCC 204508 / S288c) (Baker's yeast), this protein is Monopolin complex subunit LRS4 (LRS4).